A 951-amino-acid chain; its full sequence is Serine/threonine-protein phosphatase 4 regulatory subunit 1 (951 aa).

HEAT repeat units follow at residues Glu-26–Arg-63, Arg-82–Glu-119, Ala-127–Ile-164, Asp-168–Lys-206, Ile-208–Gln-246, Ala-248–Gln-285, and Ile-287–Asn-324. Disordered stretches follow at residues Ser-326–Val-395, Ser-407–Arg-501, His-539–Glu-569, and Gly-592–Pro-612. Composition is skewed to basic and acidic residues over residues Phe-332–Asp-360, Asp-464–Gly-483, and His-539–Leu-551. The stretch at Lys-502–His-539 is one HEAT 8 repeat. The segment covering Ala-594–Phe-604 has biased composition (gly residues). HEAT repeat units lie at residues Leu-699–Ile-735, Arg-777–Met-815, Thr-820–Leu-858, and Gln-862–Tyr-899. At Ser-936 the chain carries Phosphoserine.

As to quaternary structure, serine/threonine-protein phosphatase 4 (PP4) occurs in different assemblies of the catalytic and one or more regulatory subunits. Component of the PP4 complex PPP4C-PPP4R1. Interacts with HDAC3.

Its function is as follows. Regulatory subunit of serine/threonine-protein phosphatase 4. May play a role in regulation of cell division in renal glomeruli. The PPP4C-PPP4R1 PP4 complex may play a role in dephosphorylation and regulation of HDAC3. Plays a role in the inhibition of TNF-induced NF-kappa-B activation by regulating the dephosphorylation of TRAF2. In Rattus norvegicus (Rat), this protein is Serine/threonine-protein phosphatase 4 regulatory subunit 1 (Ppp4r1).